The chain runs to 354 residues: UPF0283 membrane protein Meso_1416 (354 aa).

The segment at 1–28 is disordered; sequence MSEPRRPAAFRIEPAPSPSPEATREDVR. Transmembrane regions (helical) follow at residues 71–91 and 105–125; these read LGAVFVAALGMLVSLAAGLWA and LGWLGAALVAVAALALFAIVV.

The protein belongs to the UPF0283 family.

Its subcellular location is the cell inner membrane. This is UPF0283 membrane protein Meso_1416 from Chelativorans sp. (strain BNC1).